The primary structure comprises 452 residues: tRNA modification GTPase MnmE (452 aa).

(6S)-5-formyl-5,6,7,8-tetrahydrofolate-binding residues include R25, E82, and R125. Residues 221 to 374 (GLHVVLAGKP…LRARLLALAG (154 aa)) enclose the TrmE-type G domain. N231 contacts K(+). Residues 231-236 (NVGKSS), 250-256 (TPIAGTT), 275-278 (DTAG), and 355-357 (SAR) contribute to the GTP site. Mg(2+) is bound at residue S235. Residues T250, I252, and T255 each coordinate K(+). T256 is a Mg(2+) binding site. K452 lines the (6S)-5-formyl-5,6,7,8-tetrahydrofolate pocket.

The protein belongs to the TRAFAC class TrmE-Era-EngA-EngB-Septin-like GTPase superfamily. TrmE GTPase family. In terms of assembly, homodimer. Heterotetramer of two MnmE and two MnmG subunits. It depends on K(+) as a cofactor.

It is found in the cytoplasm. Its function is as follows. Exhibits a very high intrinsic GTPase hydrolysis rate. Involved in the addition of a carboxymethylaminomethyl (cmnm) group at the wobble position (U34) of certain tRNAs, forming tRNA-cmnm(5)s(2)U34. The polypeptide is tRNA modification GTPase MnmE (Bordetella petrii (strain ATCC BAA-461 / DSM 12804 / CCUG 43448)).